A 152-amino-acid chain; its full sequence is D-aminoacyl-tRNA deacylase (152 aa).

Positions 137–138 (GP) match the Gly-cisPro motif, important for rejection of L-amino acids motif.

This sequence belongs to the DTD family. Homodimer.

Its subcellular location is the cytoplasm. It carries out the reaction glycyl-tRNA(Ala) + H2O = tRNA(Ala) + glycine + H(+). The catalysed reaction is a D-aminoacyl-tRNA + H2O = a tRNA + a D-alpha-amino acid + H(+). In terms of biological role, an aminoacyl-tRNA editing enzyme that deacylates mischarged D-aminoacyl-tRNAs. Also deacylates mischarged glycyl-tRNA(Ala), protecting cells against glycine mischarging by AlaRS. Acts via tRNA-based rather than protein-based catalysis; rejects L-amino acids rather than detecting D-amino acids in the active site. By recycling D-aminoacyl-tRNA to D-amino acids and free tRNA molecules, this enzyme counteracts the toxicity associated with the formation of D-aminoacyl-tRNA entities in vivo and helps enforce protein L-homochirality. The polypeptide is D-aminoacyl-tRNA deacylase (Geobacillus sp. (strain WCH70)).